The primary structure comprises 85 residues: Small ribosomal subunit protein uS17 (85 aa).

Belongs to the universal ribosomal protein uS17 family. As to quaternary structure, part of the 30S ribosomal subunit.

One of the primary rRNA binding proteins, it binds specifically to the 5'-end of 16S ribosomal RNA. This is Small ribosomal subunit protein uS17 from Syntrophus aciditrophicus (strain SB).